We begin with the raw amino-acid sequence, 338 residues long: UDP-3-O-acylglucosamine N-acyltransferase (338 aa).

Histidine 239 serves as the catalytic Proton acceptor.

This sequence belongs to the transferase hexapeptide repeat family. LpxD subfamily. Homotrimer.

The catalysed reaction is a UDP-3-O-[(3R)-3-hydroxyacyl]-alpha-D-glucosamine + a (3R)-hydroxyacyl-[ACP] = a UDP-2-N,3-O-bis[(3R)-3-hydroxyacyl]-alpha-D-glucosamine + holo-[ACP] + H(+). Its pathway is bacterial outer membrane biogenesis; LPS lipid A biosynthesis. Catalyzes the N-acylation of UDP-3-O-acylglucosamine using 3-hydroxyacyl-ACP as the acyl donor. Is involved in the biosynthesis of lipid A, a phosphorylated glycolipid that anchors the lipopolysaccharide to the outer membrane of the cell. The protein is UDP-3-O-acylglucosamine N-acyltransferase of Xylella fastidiosa (strain 9a5c).